The sequence spans 980 residues: Peroxisomal ATPase PEX6 (980 aa).

The residue at position 119 (arginine 119) is an Omega-N-methylarginine. Residues 470–477 (GPPGSGKT) and 744–751 (GPPGTGKT) contribute to the ATP site.

It belongs to the AAA ATPase family. Interacts with PEX1; forming the PEX1-PEX6 AAA ATPase complex, which is composed of a heterohexamer formed by a trimer of PEX1-PEX6 dimers. Interacts with PEX26; interaction is direct and promotes recruitment to peroxisomal membranes. Interacts with ZFAND6.

It is found in the cytoplasm. It localises to the cytosol. Its subcellular location is the peroxisome membrane. The protein localises to the cell projection. The protein resides in the cilium. It is found in the photoreceptor outer segment. The enzyme catalyses ATP + H2O = ADP + phosphate + H(+). Functionally, component of the PEX1-PEX6 AAA ATPase complex, a protein dislocase complex that mediates the ATP-dependent extraction of the PEX5 receptor from peroxisomal membranes, an essential step for PEX5 recycling. Specifically recognizes PEX5 monoubiquitinated at 'Cys-11', and pulls it out of the peroxisome lumen through the PEX2-PEX10-PEX12 retrotranslocation channel. Extraction by the PEX1-PEX6 AAA ATPase complex is accompanied by unfolding of the TPR repeats and release of bound cargo from PEX5. The chain is Peroxisomal ATPase PEX6 from Cricetulus griseus (Chinese hamster).